The sequence spans 103 residues: Putative glutaredoxin-C12 (103 aa).

One can recognise a Glutaredoxin domain in the interval 1-102 (MERVRDLASE…QMLKASNAIW (102 aa)). An intrachain disulfide couples Cys-21 to Cys-24.

It belongs to the glutaredoxin family. CC-type subfamily.

It localises to the cytoplasm. Has a glutathione-disulfide oxidoreductase activity in the presence of NADPH and glutathione reductase. Reduces low molecular weight disulfides and proteins. In Arabidopsis thaliana (Mouse-ear cress), this protein is Putative glutaredoxin-C12 (GRXC12).